A 207-amino-acid chain; its full sequence is ATP-dependent Clp protease proteolytic subunit (207 aa).

The active-site Nucleophile is Ser-111. Residue His-136 is part of the active site.

It belongs to the peptidase S14 family. In terms of assembly, fourteen ClpP subunits assemble into 2 heptameric rings which stack back to back to give a disk-like structure with a central cavity, resembling the structure of eukaryotic proteasomes. Component of the ClpAP and ClpXP complexes.

Its subcellular location is the cytoplasm. It catalyses the reaction Hydrolysis of proteins to small peptides in the presence of ATP and magnesium. alpha-casein is the usual test substrate. In the absence of ATP, only oligopeptides shorter than five residues are hydrolyzed (such as succinyl-Leu-Tyr-|-NHMec, and Leu-Tyr-Leu-|-Tyr-Trp, in which cleavage of the -Tyr-|-Leu- and -Tyr-|-Trp bonds also occurs).. Its function is as follows. Cleaves peptides in various proteins in a process that requires ATP hydrolysis. Has a chymotrypsin-like activity. Plays a major role in the degradation of misfolded proteins. The chain is ATP-dependent Clp protease proteolytic subunit from Escherichia coli O139:H28 (strain E24377A / ETEC).